Reading from the N-terminus, the 480-residue chain is Citrate synthase 1, peroxisomal (480 aa).

Active-site residues include His321, His360, and Asp416.

Belongs to the citrate synthase family. As to expression, expressed only in siliques. Not expressed in flower, stem, cauline leaf, young leaf, mature leaf and senescent leaf.

It localises to the peroxisome. It catalyses the reaction oxaloacetate + acetyl-CoA + H2O = citrate + CoA + H(+). The protein operates within carbohydrate metabolism; tricarboxylic acid cycle; isocitrate from oxaloacetate: step 1/2. The chain is Citrate synthase 1, peroxisomal (CSY1) from Arabidopsis thaliana (Mouse-ear cress).